The following is a 400-amino-acid chain: Enoyl-[acyl-carrier-protein] reductase [NADH] (400 aa).

NAD(+) is bound by residues 48 to 53 (GSSSGY), 74 to 75 (FE), 111 to 112 (DA), and 139 to 140 (LA). Tyr-225 contributes to the substrate binding site. Catalysis depends on Tyr-235, which acts as the Proton donor. NAD(+) is bound by residues Lys-244 and 273-275 (VVT).

The protein belongs to the TER reductase family. As to quaternary structure, monomer.

The catalysed reaction is a 2,3-saturated acyl-[ACP] + NAD(+) = a (2E)-enoyl-[ACP] + NADH + H(+). The protein operates within lipid metabolism; fatty acid biosynthesis. Involved in the final reduction of the elongation cycle of fatty acid synthesis (FAS II). Catalyzes the reduction of a carbon-carbon double bond in an enoyl moiety that is covalently linked to an acyl carrier protein (ACP). The chain is Enoyl-[acyl-carrier-protein] reductase [NADH] from Shewanella piezotolerans (strain WP3 / JCM 13877).